The sequence spans 400 residues: PHD finger protein 24 (400 aa).

Residue glycine 2 is the site of N-myristoyl glycine attachment. Residues arginine 29 to glycine 38 show a composition bias toward basic and acidic residues. The disordered stretch occupies residues arginine 29–alanine 65. Arginine 36 is subject to Omega-N-methylarginine. Serine 43 carries the post-translational modification Phosphoserine. Threonine 47 carries the phosphothreonine modification. Serine 51 carries the post-translational modification Phosphoserine. Residues asparagine 129 to asparagine 190 form a PHD-type zinc finger. At arginine 307 the chain carries Omega-N-methylarginine.

The chain is PHD finger protein 24 from Mus musculus (Mouse).